A 906-amino-acid chain; its full sequence is Protein translocase subunit SecA (906 aa).

ATP is bound by residues Q89, 107 to 111 (GEGKT), and D502. C890, C892, C901, and H902 together coordinate Zn(2+).

This sequence belongs to the SecA family. In terms of assembly, monomer and homodimer. Part of the essential Sec protein translocation apparatus which comprises SecA, SecYEG and auxiliary proteins SecDF-YajC and YidC. Zn(2+) is required as a cofactor.

The protein resides in the cell inner membrane. It is found in the cytoplasm. The enzyme catalyses ATP + H2O + cellular proteinSide 1 = ADP + phosphate + cellular proteinSide 2.. Functionally, part of the Sec protein translocase complex. Interacts with the SecYEG preprotein conducting channel. Has a central role in coupling the hydrolysis of ATP to the transfer of proteins into and across the cell membrane, serving both as a receptor for the preprotein-SecB complex and as an ATP-driven molecular motor driving the stepwise translocation of polypeptide chains across the membrane. This chain is Protein translocase subunit SecA, found in Brucella canis (strain ATCC 23365 / NCTC 10854 / RM-666).